The sequence spans 267 residues: 4-hydroxy-tetrahydrodipicolinate reductase (267 aa).

NAD(+)-binding positions include 10–15 (GCGGRM) and Glu-36. An NADP(+)-binding site is contributed by Arg-37. Residues 99 to 101 (GTT) and 123 to 126 (APNF) contribute to the NAD(+) site. Residue His-156 is the Proton donor/acceptor of the active site. (S)-2,3,4,5-tetrahydrodipicolinate is bound at residue His-157. Residue Lys-160 is the Proton donor of the active site. Position 166–167 (166–167 (GT)) interacts with (S)-2,3,4,5-tetrahydrodipicolinate.

It belongs to the DapB family.

Its subcellular location is the cytoplasm. It carries out the reaction (S)-2,3,4,5-tetrahydrodipicolinate + NAD(+) + H2O = (2S,4S)-4-hydroxy-2,3,4,5-tetrahydrodipicolinate + NADH + H(+). It catalyses the reaction (S)-2,3,4,5-tetrahydrodipicolinate + NADP(+) + H2O = (2S,4S)-4-hydroxy-2,3,4,5-tetrahydrodipicolinate + NADPH + H(+). It functions in the pathway amino-acid biosynthesis; L-lysine biosynthesis via DAP pathway; (S)-tetrahydrodipicolinate from L-aspartate: step 4/4. In terms of biological role, catalyzes the conversion of 4-hydroxy-tetrahydrodipicolinate (HTPA) to tetrahydrodipicolinate. The chain is 4-hydroxy-tetrahydrodipicolinate reductase from Laribacter hongkongensis (strain HLHK9).